The following is a 131-amino-acid chain: Global transcriptional regulator Spx 2 (131 aa).

Cys-10 and Cys-13 are disulfide-bonded.

Belongs to the ArsC family. Spx subfamily. Interacts with the C-terminal domain of the alpha subunit of the RNAP.

Its subcellular location is the cytoplasm. Global transcriptional regulator that plays a key role in stress response and exerts either positive or negative regulation of genes. Acts by interacting with the C-terminal domain of the alpha subunit of the RNA polymerase (RNAP). This interaction can enhance binding of RNAP to the promoter region of target genes and stimulate their transcription, or block interaction of RNAP with activator. In Bacillus cereus (strain ATCC 14579 / DSM 31 / CCUG 7414 / JCM 2152 / NBRC 15305 / NCIMB 9373 / NCTC 2599 / NRRL B-3711), this protein is Global transcriptional regulator Spx 2.